We begin with the raw amino-acid sequence, 398 residues long: Argininosuccinate lyase (398 aa).

The protein belongs to the lyase 1 family. Argininosuccinate lyase subfamily.

The protein resides in the cytoplasm. The enzyme catalyses 2-(N(omega)-L-arginino)succinate = fumarate + L-arginine. It functions in the pathway amino-acid biosynthesis; L-arginine biosynthesis; L-arginine from L-ornithine and carbamoyl phosphate: step 3/3. This chain is Argininosuccinate lyase, found in Thermotoga neapolitana (strain ATCC 49049 / DSM 4359 / NBRC 107923 / NS-E).